Consider the following 465-residue polypeptide: CUGBP Elav-like family member 3 (465 aa).

RRM domains follow at residues 7–88 and 95–174; these read IKLF…PADS and KLFV…FADT. Disordered regions lie at residues 283-311 and 345-379; these read PVPT…QSPA and PPAL…GPDG. Residues 345-358 show a composition bias toward pro residues; sequence PPALVAQQPPPPPQ. Residues 359–373 show a composition bias toward low complexity; sequence QQQQQQQQQQQQQQQ. Residues 380–458 enclose the RRM 3 domain; it reads CNIFIYHLPQ…KRLKVQLKRP (79 aa).

The protein belongs to the CELF/BRUNOL family.

Its subcellular location is the nucleus. The protein localises to the cytoplasm. In terms of biological role, RNA-binding protein involved in the regulation of pre-mRNA alternative splicing. Mediates exon inclusion and/or exclusion in pre-mRNA that are subject to tissue-specific and developmentally regulated alternative splicing. Specifically activates exon 5 inclusion of cardiac isoforms of TNNT2 during heart remodeling at the juvenile to adult transition. Activates the splicing of MAPT/Tau exon 10. Binds to muscle-specific splicing enhancer (MSE) intronic sites flanking the alternative exon 5 of TNNT2 pre-mRNA. This Mus musculus (Mouse) protein is CUGBP Elav-like family member 3 (Celf3).